The following is a 642-amino-acid chain: Pheromone-processing carboxypeptidase kex1 (642 aa).

A signal peptide spans 1 to 30 (MRSLTTKTSSALLTVWGLLSVSLMPSVGQA). Over 31–522 (DKTAGDYFVH…EAAKWNAYYK (492 aa)) the chain is Lumenal. Catalysis depends on residues Ser-186 and Asp-389. N-linked (GlcNAc...) asparagine glycosylation is found at Asn-440 and Asn-448. Residue His-451 is part of the active site. Positions 480–505 (PTDSRIDGEKGLETSVGGHPNSTAAA) are disordered. Asn-500 carries an N-linked (GlcNAc...) asparagine glycan. Residues 523-543 (SGEIVLVIVVIAASAWGYYIW) traverse the membrane as a helical segment. The Cytoplasmic portion of the chain corresponds to 544–642 (RERRQRAGYA…NGKGKEKSYS (99 aa)). The segment at 598–642 (ELDELHVRSPTDDMDRDRYSVGSASDDESIGKRNGNGKGKEKSYS) is disordered. The segment covering 600 to 616 (DELHVRSPTDDMDRDRY) has biased composition (basic and acidic residues).

It belongs to the peptidase S10 family.

The protein resides in the golgi apparatus. It is found in the trans-Golgi network membrane. The enzyme catalyses Preferential release of a C-terminal arginine or lysine residue.. Functionally, protease with a carboxypeptidase B-like function involved in the C-terminal processing of the lysine and arginine residues from protein precursors. Promotes cell fusion and is involved in the programmed cell death. This is Pheromone-processing carboxypeptidase kex1 (kex1) from Sclerotinia sclerotiorum (strain ATCC 18683 / 1980 / Ss-1) (White mold).